A 521-amino-acid chain; its full sequence is Protein nucleotidyltransferase YdiU (521 aa).

Residues Gly-109, Gly-111, Arg-112, Lys-131, Asp-143, Gly-144, Arg-194, and Arg-201 each coordinate ATP. The active-site Proton acceptor is Asp-270. Residues Asn-271 and Asp-280 each contribute to the Mg(2+) site. Asp-280 contacts ATP.

The protein belongs to the SELO family. The cofactor is Mg(2+). Mn(2+) serves as cofactor.

It carries out the reaction L-seryl-[protein] + ATP = 3-O-(5'-adenylyl)-L-seryl-[protein] + diphosphate. The catalysed reaction is L-threonyl-[protein] + ATP = 3-O-(5'-adenylyl)-L-threonyl-[protein] + diphosphate. It catalyses the reaction L-tyrosyl-[protein] + ATP = O-(5'-adenylyl)-L-tyrosyl-[protein] + diphosphate. The enzyme catalyses L-histidyl-[protein] + UTP = N(tele)-(5'-uridylyl)-L-histidyl-[protein] + diphosphate. It carries out the reaction L-seryl-[protein] + UTP = O-(5'-uridylyl)-L-seryl-[protein] + diphosphate. The catalysed reaction is L-tyrosyl-[protein] + UTP = O-(5'-uridylyl)-L-tyrosyl-[protein] + diphosphate. Nucleotidyltransferase involved in the post-translational modification of proteins. It can catalyze the addition of adenosine monophosphate (AMP) or uridine monophosphate (UMP) to a protein, resulting in modifications known as AMPylation and UMPylation. In Burkholderia pseudomallei (strain 1106a), this protein is Protein nucleotidyltransferase YdiU.